The following is a 198-amino-acid chain: Recombination protein RecR (198 aa).

Residues 56 to 71 (CDICGNVSEEPTCRIC) form a C4-type zinc finger. One can recognise a Toprim domain in the interval 79–175 (AVVCVVEEPK…NVTRLASGLP (97 aa)).

The protein belongs to the RecR family.

Functionally, may play a role in DNA repair. It seems to be involved in an RecBC-independent recombinational process of DNA repair. It may act with RecF and RecO. The chain is Recombination protein RecR from Saccharopolyspora erythraea (strain ATCC 11635 / DSM 40517 / JCM 4748 / NBRC 13426 / NCIMB 8594 / NRRL 2338).